The following is a 241-amino-acid chain: Nicotinamide riboside kinase (241 aa).

Position 21–29 (21–29 (GCSSSGKST)) interacts with ATP. Residues serine 28 and aspartate 47 each coordinate Mg(2+). The active-site Proton acceptor is aspartate 47. Substrate contacts are provided by residues 47–50 (DDFY), 67–68 (WD), and aspartate 68. Residue arginine 163 participates in ATP binding. Arginine 164 serves as a coordination point for substrate. ATP contacts are provided by residues arginine 167, 167 to 169 (RGG), and 213 to 215 (DVQ). Substrate is bound at residue 169–170 (GY).

Belongs to the uridine kinase family. NRK subfamily.

The catalysed reaction is beta-nicotinamide D-riboside + ATP = beta-nicotinamide D-ribonucleotide + ADP + H(+). It catalyses the reaction beta-D-ribosylnicotinate + ATP = nicotinate beta-D-ribonucleotide + ADP + H(+). It functions in the pathway cofactor biosynthesis; NAD(+) biosynthesis. Its function is as follows. Catalyzes the phosphorylation of nicotinamide riboside (NR) and nicotinic acid riboside (NaR) to form nicotinamide mononucleotide (NMN) and nicotinic acid mononucleotide (NaMN). The polypeptide is Nicotinamide riboside kinase (NRK1) (Eremothecium gossypii (strain ATCC 10895 / CBS 109.51 / FGSC 9923 / NRRL Y-1056) (Yeast)).